The primary structure comprises 540 residues: Light-independent protochlorophyllide reductase subunit B (540 aa).

Asp-36 lines the [4Fe-4S] cluster pocket. Asp-287 functions as the Proton donor in the catalytic mechanism. Position 422–423 (422–423 (GL)) interacts with substrate.

This sequence belongs to the ChlB/BchB/BchZ family. Protochlorophyllide reductase is composed of three subunits; BchL, BchN and BchB. Forms a heterotetramer of two BchB and two BchN subunits. [4Fe-4S] cluster is required as a cofactor.

It catalyses the reaction chlorophyllide a + oxidized 2[4Fe-4S]-[ferredoxin] + 2 ADP + 2 phosphate = protochlorophyllide a + reduced 2[4Fe-4S]-[ferredoxin] + 2 ATP + 2 H2O. It functions in the pathway porphyrin-containing compound metabolism; bacteriochlorophyll biosynthesis (light-independent). Component of the dark-operative protochlorophyllide reductase (DPOR) that uses Mg-ATP and reduced ferredoxin to reduce ring D of protochlorophyllide (Pchlide) to form chlorophyllide a (Chlide). This reaction is light-independent. The NB-protein (BchN-BchB) is the catalytic component of the complex. The sequence is that of Light-independent protochlorophyllide reductase subunit B from Rhodopseudomonas palustris (strain TIE-1).